Consider the following 330-residue polypeptide: Inactive hydroxysteroid dehydrogenase-like protein 1 (330 aa).

At A2 the chain carries N-acetylalanine. Positions 2–82 (AAVDSFYLLY…SGATDGIGKA (81 aa)) are required for mitochondria translocation. NADP(+) contacts are provided by residues 74 to 80 (GATDGIG), D125, and K222.

Belongs to the short-chain dehydrogenases/reductases (SDR) family. 17-beta-HSD 3 subfamily. In terms of assembly, interacts with STYXL1.

It is found in the mitochondrion. This Mus musculus (Mouse) protein is Inactive hydroxysteroid dehydrogenase-like protein 1 (Hsdl1).